Consider the following 4450-residue polypeptide: Gramicidin S synthase 2 (4450 aa).

A domain 1 (proline-activating) region spans residues 467–1044 (DKTIHQLFTE…IQEISNYING (578 aa)). Carrier domains follow at residues 971–1046 (VPTN…NGAK), 2006–2081 (APSS…ADGE), 3051–3126 (APRT…EETD), and 4089–4164 (APRN…THQE). 4 positions are modified to O-(pantetheine 4'-phosphoryl)serine: serine 1006, serine 2041, serine 3086, and serine 4124. The tract at residues 1521 to 2080 (DHVAVGWKDQ…SALAQYIADG (560 aa)) is domain 2 (valine-activating). The tract at residues 2538–3134 (YATNKIFHEL…TDTEQYMAIQ (597 aa)) is domain 3 (ornithine-activating). Residues 3590-4172 (IQELFEEQVK…QESENNVHQP (583 aa)) are domain 4 (leucine-activating).

It belongs to the ATP-dependent AMP-binding enzyme family. In terms of assembly, large multienzyme complex of GrsA and GrsB. It depends on pantetheine 4'-phosphate as a cofactor.

It functions in the pathway antibiotic biosynthesis; gramicidin S biosynthesis. Its function is as follows. This protein is a multifunctional enzyme, able to activate and polymerize the amino acids Pro, Val, Orn and Leu. Activation sites for these AA consist of individual domains. This chain is Gramicidin S synthase 2 (grsB), found in Brevibacillus brevis (Bacillus brevis).